The sequence spans 70 residues: Exodeoxyribonuclease 7 small subunit (70 aa).

This sequence belongs to the XseB family. In terms of assembly, heterooligomer composed of large and small subunits.

The protein resides in the cytoplasm. It carries out the reaction Exonucleolytic cleavage in either 5'- to 3'- or 3'- to 5'-direction to yield nucleoside 5'-phosphates.. Its function is as follows. Bidirectionally degrades single-stranded DNA into large acid-insoluble oligonucleotides, which are then degraded further into small acid-soluble oligonucleotides. This Magnetococcus marinus (strain ATCC BAA-1437 / JCM 17883 / MC-1) protein is Exodeoxyribonuclease 7 small subunit.